The sequence spans 90 residues: Large ribosomal subunit protein eL34 (90 aa).

Zn(2+)-binding residues include Cys36, Cys39, Cys72, and Cys75. The disordered stretch occupies residues Arg41–Cys72.

The protein belongs to the eukaryotic ribosomal protein eL34 family. In terms of assembly, part of the 50S ribosomal subunit. Zn(2+) serves as cofactor.

The polypeptide is Large ribosomal subunit protein eL34 (Thermococcus kodakarensis (strain ATCC BAA-918 / JCM 12380 / KOD1) (Pyrococcus kodakaraensis (strain KOD1))).